The sequence spans 398 residues: O-methyltransferase mpaG (398 aa).

Residue S144 coordinates (4E,8E)-10-(4,6-dihydroxy-7-methyl-3-oxo-1,3-dihydro-2-benzofuran-5-yl)-4,8-dimethyldeca-4,8-dienoate. S144 contacts 4-farnesyl-3,5-dihydroxy-6-methylphthalide. S144 provides a ligand contact to 6-O-desmethylmycophenolate. N197 is a binding site for S-adenosyl-L-homocysteine. Position 199 (Y199) interacts with (4E,8E)-10-(4,6-dihydroxy-7-methyl-3-oxo-1,3-dihydro-2-benzofuran-5-yl)-4,8-dimethyldeca-4,8-dienoate. Y199 is a 4-farnesyl-3,5-dihydroxy-6-methylphthalide binding site. Y199 is a binding site for 6-O-desmethylmycophenolate. Y203, D237, G239, H244, D245, D264, and R265 together coordinate S-adenosyl-L-homocysteine. Residue D264 participates in S-adenosyl-L-methionine binding. (4E,8E)-10-(4,6-dihydroxy-7-methyl-3-oxo-1,3-dihydro-2-benzofuran-5-yl)-4,8-dimethyldeca-4,8-dienoate-binding residues include R265 and Q267. 6-O-desmethylmycophenolate is bound at residue R265. Residues D286, I287, and H302 each contribute to the S-adenosyl-L-homocysteine site. S303 is a binding site for (4E,8E)-10-(4,6-dihydroxy-7-methyl-3-oxo-1,3-dihydro-2-benzofuran-5-yl)-4,8-dimethyldeca-4,8-dienoate. S303 serves as a coordination point for 4-farnesyl-3,5-dihydroxy-6-methylphthalide. S303 is a binding site for 6-O-desmethylmycophenolate. The active-site Proton acceptor is the H306. Residues E335 and E362 contribute to the active site.

The protein belongs to the class I-like SAM-binding methyltransferase superfamily. Cation-independent O-methyltransferase family. COMT subfamily. As to quaternary structure, homodimer.

It localises to the cytoplasm. The protein resides in the cytosol. It catalyses the reaction (4E,8E)-10-(4,6-dihydroxy-7-methyl-3-oxo-1,3-dihydro-2-benzofuran-5-yl)-4,8-dimethyldeca-4,8-dienoate + S-adenosyl-L-methionine = (4E,8E)-10-(4-hydroxy-6-methoxy-7-methyl-3-oxo-1,3-dihydro-2-benzofuran-5-yl)-4,8-dimethyldeca-4,8-dienoate + S-adenosyl-L-homocysteine + H(+). The catalysed reaction is 4-farnesyl-3,5-dihydroxy-6-methylphthalide + S-adenosyl-L-methionine = 4-farnesyl-3,5-dihydroxy-6-methoxylphthalide + S-adenosyl-L-homocysteine + H(+). The enzyme catalyses 6-O-desmethylmycophenolate + S-adenosyl-L-methionine = mycophenolate + S-adenosyl-L-homocysteine + H(+). The protein operates within secondary metabolite biosynthesis; terpenoid biosynthesis. In terms of biological role, O-methyltransferase; part of the gene cluster that mediates the biosynthesis of mycophenolic acid (MPA), the first isolated antibiotic natural product in the world obtained from a culture of Penicillium brevicompactum in 1893. MpaG methylates farnesyl-DHMP-3C (FDHMP-3C) to yield MFDHMP-3C. The first step of the pathway is the synthesis of 5-methylorsellinic acid (5MOA) by the cytosolic polyketide synthase mpaC. 5MOA is then converted to the phthalide compound 5,7-dihydroxy-4,6-dimethylphthalide (DHMP) by the endoplasmic reticulum-bound cytochrome P450 monooxygenase mpaDE. MpaDE first catalyzes hydroxylation of 5-MOA to 4,6-dihydroxy-2-(hydroxymethyl)-3-methylbenzoic acid (DHMB). MpaDE then acts as a lactone synthase that catalyzes the ring closure to convert DHMB into DHMP. The next step is the prenylation of DHMP by the Golgi apparatus-associated prenyltransferase mpaA to yield farnesyl-DHMP (FDHMP). The ER-bound oxygenase mpaB then mediates the oxidative cleavage the C19-C20 double bond in FDHMP to yield FDHMP-3C via a mycophenolic aldehyde intermediate. The O-methyltransferase mpaG catalyzes the methylation of FDHMP-3C to yield MFDHMP-3C. MpaG and mpaB can also switch the order in which they act and, in this case, the conversion of FDHMP to MFDHMP-3C can take place via 5-O-methyl-FDHMP (MFDHMP). After the cytosolic methylation of FDHMP-3C, MFDHMP-3C enters into peroxisomes probably via free diffusion due to its low molecular weight. Upon a peroxisomal CoA ligation reaction, catalyzed by a beta-oxidation component enzyme acyl-CoA ligase ACL891, MFDHMP-3C-CoA would then be restricted to peroxisomes for the following beta-oxidation pathway steps. The peroxisomal beta-oxidation machinery than converts MFDHMP-3C-CoA into MPA_CoA, via a beta-oxidation chain-shortening process. Finally mpaH acts as a peroxisomal acyl-CoA hydrolase with high substrate specificity toward MPA-CoA to release the final product MPA. MpaH can also hydrolyze DMMPA-CoA to release demethylmycophenolic acid (DMMPA) that is further converted to MPA by mpaG. The sequence is that of O-methyltransferase mpaG from Penicillium brevicompactum.